A 492-amino-acid polypeptide reads, in one-letter code: N-succinylglutamate 5-semialdehyde dehydrogenase (492 aa).

220–225 contacts NAD(+); the sequence is GSANTG. Residues Glu243 and Cys277 contribute to the active site.

The protein belongs to the aldehyde dehydrogenase family. AstD subfamily.

The enzyme catalyses N-succinyl-L-glutamate 5-semialdehyde + NAD(+) + H2O = N-succinyl-L-glutamate + NADH + 2 H(+). It participates in amino-acid degradation; L-arginine degradation via AST pathway; L-glutamate and succinate from L-arginine: step 4/5. Functionally, catalyzes the NAD-dependent reduction of succinylglutamate semialdehyde into succinylglutamate. The chain is N-succinylglutamate 5-semialdehyde dehydrogenase from Escherichia coli (strain 55989 / EAEC).